Here is a 240-residue protein sequence, read N- to C-terminus: MEKQYLLYEGKAKKVYATNEKHVLWIEYKDEATAFNGEKKATIVGKGRLNNEITSLLFSLLHEAGVSNHFIRKISDTEQLVRQVTIIPLEVVVRNIVAGSLAKRIGLEEGTVMKKPIVEFYYKNDDLGDPLLTEDHIALLQLATHDELLYMKQMALRINDILTSLFRSCDLQLVDFKLEFGKDETGAVLLADEISPDTCRLWDVHTKEKFDKDVFRRDLGDLTETYTKLLQRLGGLSCTK.

Belongs to the SAICAR synthetase family.

The enzyme catalyses 5-amino-1-(5-phospho-D-ribosyl)imidazole-4-carboxylate + L-aspartate + ATP = (2S)-2-[5-amino-1-(5-phospho-beta-D-ribosyl)imidazole-4-carboxamido]succinate + ADP + phosphate + 2 H(+). The protein operates within purine metabolism; IMP biosynthesis via de novo pathway; 5-amino-1-(5-phospho-D-ribosyl)imidazole-4-carboxamide from 5-amino-1-(5-phospho-D-ribosyl)imidazole-4-carboxylate: step 1/2. This chain is Phosphoribosylaminoimidazole-succinocarboxamide synthase, found in Anoxybacillus flavithermus (strain DSM 21510 / WK1).